The sequence spans 198 residues: Putative glutathione S-transferase alpha-5 (198 aa).

The 77-residue stretch at 2 to 78 folds into the GST N-terminal domain; that stretch reads TKPTLTYFPV…YISEKHDFRG (77 aa). Glutathione-binding positions include Tyr8, Arg42, 49–50, and 62–63; these read QL and QT. The GST C-terminal domain occupies 80–198; sequence TKEERARAHQ…YLESRPQSNF (119 aa).

Belongs to the GST superfamily. Alpha family.

It carries out the reaction RX + glutathione = an S-substituted glutathione + a halide anion + H(+). Conjugation of reduced glutathione to a wide number of exogenous and endogenous hydrophobic electrophiles. This is Putative glutathione S-transferase alpha-5 (gsta5) from Dictyostelium discoideum (Social amoeba).